A 360-amino-acid polypeptide reads, in one-letter code: SVP1-like protein 2 (360 aa).

WD repeat units lie at residues 12–50 (AHEP…LRMK), 191–231 (AHKS…LRFE), and 236–275 (LDRA…PQPE).

This sequence belongs to the WD repeat PROPPIN family.

It is found in the vacuole membrane. The protein localises to the cytoplasmic vesicle membrane. Functionally, involved in mitochondrial or peroxisomal functions and amino acid signaling pathways. This Pichia angusta (Yeast) protein is SVP1-like protein 2 (HSV2).